We begin with the raw amino-acid sequence, 456 residues long: MFS-type transporter SLC18B1 (456 aa).

Methionine 1 is modified (N-acetylmethionine). Residues 1–24 form a disordered region; sequence MEALGDLEGPRAPGGDDPAGSAGE. Residues 1-33 lie on the Cytoplasmic side of the membrane; that stretch reads MEALGDLEGPRAPGGDDPAGSAGETPGWLSREQ. Residues 10–23 are compositionally biased toward low complexity; that stretch reads PRAPGGDDPAGSAG. Serine 21 is modified (phosphoserine). A helical transmembrane segment spans residues 34–54; sequence VFVLISAASVNLGSMMCYSIL. At 55 to 70 the chain is on the extracellular side; the sequence is GPFFPKEAEKKGASNT. A helical membrane pass occupies residues 71-91; the sequence is IIGMIFGCFALFELLASLVFG. Over 92–100 the chain is Cytoplasmic; that stretch reads NYLVHIGAK. The helical transmembrane segment at 101 to 121 threads the bilayer; the sequence is FMFVAGMFVSGGVTILFGVLD. At 122–127 the chain is on the extracellular side; sequence RVPDGP. A helical membrane pass occupies residues 128–148; that stretch reads VFIAMCFLVRVMDAVSFAAAM. The Cytoplasmic portion of the chain corresponds to 149-161; sequence TASSSILAKAFPN. Residues 162–184 form a helical membrane-spanning segment; the sequence is NVATVLGSLETFSGLGLILGPPV. At 185 to 195 the chain is on the extracellular side; sequence GGFLYQSFGYE. A helical membrane pass occupies residues 196-216; sequence VPFIVLGCVVLLMVPLNMYIL. Residues 217 to 230 lie on the Cytoplasmic side of the membrane; sequence PNYESDPGEHSFWK. The helical transmembrane segment at 231–251 threads the bilayer; that stretch reads LIALPKVGLIAFVINSLSSCF. Residues 252 to 272 lie on the Extracellular side of the membrane; sequence GFLDPTLSLFVLEKFNLPAGY. The chain crosses the membrane as a helical span at residues 273-293; the sequence is VGLVFLGMALSYAISSPLFGL. The Cytoplasmic segment spans residues 294–304; sequence LSDKRPPLRKW. The helical transmembrane segment at 305-325 threads the bilayer; that stretch reads LLVFGNLITAGCYMLLGPVPI. Over 326–331 the chain is Extracellular; sequence LHIKSQ. A helical transmembrane segment spans residues 332 to 352; that stretch reads LWLLVLILVVSGLSAGMSIIP. Residues 353–377 are Cytoplasmic-facing; it reads TFPEILSCAHENGFEEGLSTLGLVS. Residues 378 to 398 traverse the membrane as a helical segment; sequence GLFSAMWSIGAFMGPTLGGFL. The Extracellular portion of the chain corresponds to 399–407; sequence YEKIGFEWA. The chain crosses the membrane as a helical span at residues 408-428; that stretch reads AAIQGLWALISGLAMGLFYLL. At 429–456 the chain is on the cytoplasmic side; sequence EYSRRKRSKSQNILSTEEERTTLLPNET. Serine 438 carries the post-translational modification Phosphoserine.

It belongs to the major facilitator superfamily. Expressed in various tissues including lung, placenta, adrenal gland, liver, testis, and brain.

It is found in the cytoplasmic vesicle. Its subcellular location is the secretory vesicle membrane. The protein localises to the secretory vesicle. The protein resides in the synaptic vesicle membrane. The catalysed reaction is spermine(in) + n H(+)(out) = spermine(out) + n H(+)(in). It carries out the reaction spermidine(in) + n H(+)(out) = spermidine(out) + n H(+)(in). The enzyme catalyses serotonin(in) + n H(+)(out) = serotonin(out) + n H(+)(in). Proton-coupled polyamine antiporter involved in the translocation of polyamines from cytosol into secretory vesicles prior to their release via exocytosis. Uses the electrochemical proton gradient generated by a V-type proton-pumping ATPase to couple the efflux of protons with the uptake of a polyamine molecule. Facilitates vesicular storage of spermine and spermidine in astrocytes with an impact on glutamatergic neuronal transmission and memory formation. Upon antigen stimulation, regulates polyamine accumulation and release in mast cell secretory granules, which in turn potentiates mast cell degranulation and histamine secretion. In Homo sapiens (Human), this protein is MFS-type transporter SLC18B1.